We begin with the raw amino-acid sequence, 457 residues long: Argininosuccinate lyase (457 aa).

Belongs to the lyase 1 family. Argininosuccinate lyase subfamily.

The protein resides in the cytoplasm. The catalysed reaction is 2-(N(omega)-L-arginino)succinate = fumarate + L-arginine. The protein operates within amino-acid biosynthesis; L-arginine biosynthesis; L-arginine from L-ornithine and carbamoyl phosphate: step 3/3. The sequence is that of Argininosuccinate lyase from Psychrobacter arcticus (strain DSM 17307 / VKM B-2377 / 273-4).